The primary structure comprises 263 residues: 4-hydroxy-tetrahydrodipicolinate reductase (263 aa).

NAD(+) is bound by residues 7 to 12, 96 to 98, and 122 to 125; these read GFKGRM, GTT, and APNF. Catalysis depends on histidine 152, which acts as the Proton donor/acceptor. Histidine 153 lines the (S)-2,3,4,5-tetrahydrodipicolinate pocket. Lysine 156 (proton donor) is an active-site residue. A (S)-2,3,4,5-tetrahydrodipicolinate-binding site is contributed by 162–163; it reads GT.

This sequence belongs to the DapB family.

It localises to the cytoplasm. The enzyme catalyses (S)-2,3,4,5-tetrahydrodipicolinate + NAD(+) + H2O = (2S,4S)-4-hydroxy-2,3,4,5-tetrahydrodipicolinate + NADH + H(+). It carries out the reaction (S)-2,3,4,5-tetrahydrodipicolinate + NADP(+) + H2O = (2S,4S)-4-hydroxy-2,3,4,5-tetrahydrodipicolinate + NADPH + H(+). Its pathway is amino-acid biosynthesis; L-lysine biosynthesis via DAP pathway; (S)-tetrahydrodipicolinate from L-aspartate: step 4/4. Functionally, catalyzes the conversion of 4-hydroxy-tetrahydrodipicolinate (HTPA) to tetrahydrodipicolinate. In Listeria welshimeri serovar 6b (strain ATCC 35897 / DSM 20650 / CCUG 15529 / CIP 8149 / NCTC 11857 / SLCC 5334 / V8), this protein is 4-hydroxy-tetrahydrodipicolinate reductase.